We begin with the raw amino-acid sequence, 1499 residues long: Rap guanine nucleotide exchange factor 2 (1499 aa).

Disordered regions lie at residues 40–59 (HVSSSHSGCSITSDSGSSSL) and 68–101 (SEAGDMDLSGLPETAVDSEDDDDEEDIERASDPL). Residues 83-94 (VDSEDDDDEEDI) are compositionally biased toward acidic residues. 135–254 (AFANMTMSVR…VEEEGEIVMV (120 aa)) contributes to the a nucleoside 3',5'-cyclic phosphate binding site. The region spanning 267–380 (KGHIVIKGTS…RLLNIACAAK (114 aa)) is the N-terminal Ras-GEF domain. One can recognise a PDZ domain in the interval 385–470 (LMTLTKPSRE…ITVKTNLFVF (86 aa)). S501 is subject to Phosphoserine. One can recognise a Ras-associating domain in the interval 606–692 (PDQVLRVFKA…GRYYLKNNME (87 aa)). Position 644 is a phosphothreonine; by PLK2 (T644). The region spanning 717 to 944 (STVEVATQLS…SQGSTNATVL (228 aa)) is the Ras-GEF domain. Residue S806 is modified to Phosphoserine; by PLK2. S930 bears the Phosphoserine mark. S933 bears the Phosphoserine; by PLK2 mark. The interval 1002–1050 (PATNTLPKNPGDKKPVKSETSPVAPRAGSQQKAQSLPQPQQQPPPAHKI) is disordered. S1022 bears the Phosphoserine mark. A compositionally biased stretch (low complexity) spans 1031–1040 (QQKAQSLPQP). Residues S1080, S1089, S1095, S1116, S1120, and S1159 each carry the phosphoserine modification. The tract at residues 1095–1160 (SLERHKKQAE…RSSIVSNSSF (66 aa)) is disordered. 2 stretches are compositionally biased toward low complexity: residues 1111-1125 (SSQLSSPPTSPQSSP) and 1141-1160 (SDSGHSEISSRSSIVSNSSF). Residue S1176 is modified to Phosphoserine; by PLK2. Disordered stretches follow at residues 1224-1256 (PSTEELSQDQGDRASLDAADSGRGSWTSCSSGS) and 1305-1499 (TKYN…VSAV). Polar residues-rich tracts occupy residues 1247-1256 (GSWTSCSSGS) and 1307-1331 (YNRQNQSRESLEQAQSRASWASSTG). Residues 1355 to 1366 (EAESSSLTSVTT) are compositionally biased toward low complexity. Positions 1441 to 1462 (SSDTAGPSSVQQPHGHPTSSRP) are enriched in polar residues. Positions 1488–1499 (TEEDEDEQVSAV) are enriched in acidic residues.

This sequence belongs to the RAPGEF2 family. In terms of assembly, interacts with CDH1, CTNNB1 and TJP1. Interacts (via C-terminal domain) with MAGI2 (via PDZ and WW domains); the interaction occurs before or after NGF stimulation. Interacts with KIDINS220 and NTRK1; the interactions occur after NGF stimulation. Found in a complex, at least composed of KIDINS220, MAGI2, NTRK1 and RAPGEF2; the complex is mainly formed at late endosomes in a neuronal growth factor (NGF)-dependent manner. Interacts (via C-terminal domain) with NEDD4 (via WW domains); this interaction leads to ubiquitination and degradation via the proteasome pathway in a cAMP-independent manner. Interacts with MAGI1 isoform 3 (via PDZ domain). Interacts with ADRB1 (via C-terminal PDZ motif); the interaction is direct. Interacts (via Ras-associating domain) with RAP1A (via GTP-bound active form). Interacts weakly with HRAS (via GDP- and GTP-bound forms). Interacts (via C-terminal domain) with MAGI2 (via PDZ and WW domains). In terms of processing, ubiquitinated by NEDD4, leading to proteasomal degradation. Post-translationally, phosphorylation by PLK2 promotes its activity. As to expression, expressed in primary neuronal and endocrine cells (at protein level). Highest expression levels in brain. Lower expression levels in heart, kidney, lung, placenta and blood leukocytes.

It is found in the cytoplasm. The protein resides in the perinuclear region. Its subcellular location is the cell membrane. It localises to the late endosome. The protein localises to the cell junction. Its function is as follows. Functions as a guanine nucleotide exchange factor (GEF), which activates Rap and Ras family of small GTPases by exchanging bound GDP for free GTP in a cAMP-dependent manner. Serves as a link between cell surface receptors and Rap/Ras GTPases in intracellular signaling cascades. Also acts as an effector for Rap1 by direct association with Rap1-GTP thereby leading to the amplification of Rap1-mediated signaling. Shows weak activity on HRAS. It is controversial whether RAPGEF2 binds cAMP and cGMP or not. Its binding to ligand-activated beta-1 adrenergic receptor ADRB1 leads to the Ras activation through the G(s)-alpha signaling pathway. Involved in the cAMP-induced Ras and Erk1/2 signaling pathway that leads to sustained inhibition of long term melanogenesis by reducing dendrite extension and melanin synthesis. Also provides inhibitory signals for cell proliferation of melanoma cells and promotes their apoptosis in a cAMP-independent nanner. Regulates cAMP-induced neuritogenesis by mediating the Rap1/B-Raf/ERK signaling through a pathway that is independent on both PKA and RAPGEF3/RAPGEF4. Involved in neuron migration and in the formation of the major forebrain fiber connections forming the corpus callosum, the anterior commissure and the hippocampal commissure during brain development. Involved in neuronal growth factor (NGF)-induced sustained activation of Rap1 at late endosomes and in brain-derived neurotrophic factor (BDNF)-induced axon outgrowth of hippocampal neurons. Plays a role in the regulation of embryonic blood vessel formation and in the establishment of basal junction integrity and endothelial barrier function. May be involved in the regulation of the vascular endothelial growth factor receptor KDR and cadherin CDH5 expression at allantois endothelial cell-cell junctions. The protein is Rap guanine nucleotide exchange factor 2 (RAPGEF2) of Homo sapiens (Human).